Reading from the N-terminus, the 586-residue chain is Putative ABC transporter ATP-binding protein MG187 homolog (586 aa).

Residues 13 to 464 (IEFKNIVVDF…PANEFVATFL (452 aa)) form the ABC transporter domain. 45–52 (GPSGCGKT) is an ATP binding site.

The protein belongs to the ABC transporter superfamily.

This Mycoplasma pneumoniae (strain ATCC 29342 / M129 / Subtype 1) (Mycoplasmoides pneumoniae) protein is Putative ABC transporter ATP-binding protein MG187 homolog.